We begin with the raw amino-acid sequence, 623 residues long: Transcriptional activator of proteases prtT (623 aa).

Positions 50 to 79 (CHTCRKLKTRCDLDPRGHACRRCLSLRIDC) form a DNA-binding region, zn(2)-C6 fungal-type.

Belongs to the prtT family.

It localises to the nucleus. In terms of biological role, transcription factor required for protein utilization and degradation. Regulates transcription of major secreted proteases. The sequence is that of Transcriptional activator of proteases prtT (prtT) from Aspergillus niger (strain ATCC MYA-4892 / CBS 513.88 / FGSC A1513).